The sequence spans 334 residues: Thiamine-binding periplasmic protein (334 aa).

Residues Met1 to Ala23 form the signal peptide. Thiamine-binding positions include Asp64–Gly65, Ala166–Thr167, Trp202, and Tyr220–Ser223.

Belongs to the bacterial solute-binding protein 1 family. In terms of assembly, the complex is composed of two ATP-binding proteins (ThiQ), two transmembrane proteins (ThiP) and a solute-binding protein (ThiB).

It is found in the periplasm. Functionally, part of the ABC transporter complex ThiBPQ involved in thiamine import. This chain is Thiamine-binding periplasmic protein (thiB), found in Brucella suis biovar 1 (strain 1330).